Reading from the N-terminus, the 737-residue chain is 1,4-alpha-glucan branching enzyme GlgB (737 aa).

Asp419 (nucleophile) is an active-site residue. Glu472 functions as the Proton donor in the catalytic mechanism.

The protein belongs to the glycosyl hydrolase 13 family. GlgB subfamily. As to quaternary structure, monomer.

The enzyme catalyses Transfers a segment of a (1-&gt;4)-alpha-D-glucan chain to a primary hydroxy group in a similar glucan chain.. It functions in the pathway glycan biosynthesis; glycogen biosynthesis. Its function is as follows. Catalyzes the formation of the alpha-1,6-glucosidic linkages in glycogen by scission of a 1,4-alpha-linked oligosaccharide from growing alpha-1,4-glucan chains and the subsequent attachment of the oligosaccharide to the alpha-1,6 position. The protein is 1,4-alpha-glucan branching enzyme GlgB of Mesorhizobium japonicum (strain LMG 29417 / CECT 9101 / MAFF 303099) (Mesorhizobium loti (strain MAFF 303099)).